The following is a 1196-amino-acid chain: Probable cation-transporting ATPase 13A4 (1196 aa).

The Cytoplasmic segment spans residues M1–R31. An intramembrane segment occupies K32–W52. Residues R53–L197 are Cytoplasmic-facing. Residues L198 to F218 traverse the membrane as a helical segment. Topologically, residues S219–K223 are lumenal. The helical transmembrane segment at E224 to L244 threads the bilayer. Residues R245 to R400 lie on the Cytoplasmic side of the membrane. A helical transmembrane segment spans residues F401–V421. Residues L422–D436 lie on the Lumenal side of the membrane. The helical transmembrane segment at V437–A457 threads the bilayer. At Q458–S900 the chain is on the cytoplasmic side. Residue D486 is the 4-aspartylphosphate intermediate of the active site. Residues D848 and D852 each coordinate Mg(2+). A helical transmembrane segment spans residues F901–L921. Topologically, residues Y922–Q932 are lumenal. The helical transmembrane segment at F933 to A953 threads the bilayer. Residues Y954 to L972 lie on the Cytoplasmic side of the membrane. A helical transmembrane segment spans residues L973–V993. The Lumenal segment spans residues Q994–S1035. A helical transmembrane segment spans residues F1036 to F1056. Residues S1057–Y1070 lie on the Cytoplasmic side of the membrane. Residues I1071–I1091 form a helical membrane-spanning segment. The Lumenal portion of the chain corresponds to P1092–A1109. A helical membrane pass occupies residues S1110–I1130. The Cytoplasmic portion of the chain corresponds to E1131–L1196.

Belongs to the cation transport ATPase (P-type) (TC 3.A.3) family. Type V subfamily. Expressed in heart, placenta, liver, skeletal muscles, and pancreas. Lower levels of expression are also detected in brain, lung and kidney. Weakly expressed in the adult brain. Expression in fetal brain is higher than in adult brain, with levels similar to several other fetal tissues including spleen and skeletal muscle. In adult brain expressed at low levels in all tissues examined, including the temporal lobe and putamen. Highly expressed in the respiratory and integumentary systems.

The protein localises to the early endosome membrane. Its subcellular location is the late endosome membrane. The protein resides in the recycling endosome membrane. The catalysed reaction is ATP + H2O = ADP + phosphate + H(+). This chain is Probable cation-transporting ATPase 13A4 (ATP13A4), found in Homo sapiens (Human).